Here is a 66-residue protein sequence, read N- to C-terminus: Putative alpha-neurotoxin RjAa44 (66 aa).

The LCN-type CS-alpha/beta domain occupies 1–60 (KEGYPVDWGNCKYECMSDAYCKDLCADRKAKSGYCYKLNWSCYCEGLPDDSPIKTNGHCR). 4 cysteine pairs are disulfide-bonded: Cys-11–Cys-59, Cys-15–Cys-35, Cys-21–Cys-42, and Cys-25–Cys-44.

Belongs to the long (4 C-C) scorpion toxin superfamily. Sodium channel inhibitor family. Alpha subfamily. As to expression, expressed by the venom gland.

It localises to the secreted. Functionally, alpha toxins bind voltage-independently at site-3 of sodium channels (Nav) and inhibit the inactivation of the activated channels, thereby blocking neuronal transmission. The sequence is that of Putative alpha-neurotoxin RjAa44 from Rhopalurus junceus (Caribbean blue scorpion).